Reading from the N-terminus, the 273-residue chain is DnaJ homolog subfamily C member 27 (273 aa).

Residues 23–30 (GNAEVGKS), 71–75 (DMAGH), and 134–137 (NKVD) each bind GTP. The J domain occupies 217-273 (DSWDMLGVKPGATREEVNKAYRKLAVLLHPDKCVAPGSEDAFKAVVNARTSLLKNIK).

This sequence belongs to the small GTPase superfamily. Rab family.

It is found in the nucleus. In terms of biological role, GTPase possibly involved in regulation of the MEK/ERK pathway. This Danio rerio (Zebrafish) protein is DnaJ homolog subfamily C member 27 (dnajc27).